The primary structure comprises 109 residues: COX assembly mitochondrial protein 2 (109 aa).

One can recognise a CHCH domain in the interval 10–54; that stretch reads FHSCLDFINALDKCHQKEYYKRIFGLCNNEKDALNKCLKEASLNN. 2 consecutive short sequence motifs (cx9C motif) follow at residues 13 to 23 and 36 to 46; these read CLDFINALDKC and CNNEKDALNKC. 2 cysteine pairs are disulfide-bonded: Cys-13–Cys-46 and Cys-23–Cys-36.

It belongs to the CMC family. As to quaternary structure, interacts with CMC1.

It is found in the mitochondrion inner membrane. It localises to the mitochondrion intermembrane space. Functionally, required for mitochondrial cytochrome c oxidase (COX) assembly and respiration. May be involved in copper trafficking and distribution to mitochondrial COX and SOD1. The chain is COX assembly mitochondrial protein 2 (CMC2) from Saccharomyces cerevisiae (strain ATCC 204508 / S288c) (Baker's yeast).